Here is a 463-residue protein sequence, read N- to C-terminus: mRNA-capping enzyme subunit alpha (463 aa).

Residue Lys-66 is the N6-GMP-lysine intermediate of the active site. Residues 404 to 463 (WEERKSKKRTHSSISGPMLPPVAETKAPREATQSRYIDDEDWSDEADDDDEDSLKRARIE) form a disordered region. A compositionally biased stretch (acidic residues) spans 441–455 (DDEDWSDEADDDDED).

It belongs to the eukaryotic GTase family. As to quaternary structure, heterodimer. The mRNA-capping enzyme is composed of two separate chains alpha and beta, respectively a mRNA guanylyltransferase and an mRNA 5'-triphosphate monophosphatase.

The protein localises to the nucleus. The catalysed reaction is a 5'-end diphospho-ribonucleoside in mRNA + GTP + H(+) = a 5'-end (5'-triphosphoguanosine)-ribonucleoside in mRNA + diphosphate. Its function is as follows. Second step of mRNA capping. Transfer of the GMP moiety of GTP to the 5'-end of RNA via an enzyme-GMP covalent reaction intermediate. In Eremothecium gossypii (strain ATCC 10895 / CBS 109.51 / FGSC 9923 / NRRL Y-1056) (Yeast), this protein is mRNA-capping enzyme subunit alpha (CEG1).